Here is a 161-residue protein sequence, read N- to C-terminus: SsrA-binding protein (161 aa).

Residues 139-153 (RESIKRKEENRELDR) show a composition bias toward basic and acidic residues. A disordered region spans residues 139 to 161 (RESIKRKEENRELDRLRKRRRQE).

This sequence belongs to the SmpB family.

It is found in the cytoplasm. In terms of biological role, required for rescue of stalled ribosomes mediated by trans-translation. Binds to transfer-messenger RNA (tmRNA), required for stable association of tmRNA with ribosomes. tmRNA and SmpB together mimic tRNA shape, replacing the anticodon stem-loop with SmpB. tmRNA is encoded by the ssrA gene; the 2 termini fold to resemble tRNA(Ala) and it encodes a 'tag peptide', a short internal open reading frame. During trans-translation Ala-aminoacylated tmRNA acts like a tRNA, entering the A-site of stalled ribosomes, displacing the stalled mRNA. The ribosome then switches to translate the ORF on the tmRNA; the nascent peptide is terminated with the 'tag peptide' encoded by the tmRNA and targeted for degradation. The ribosome is freed to recommence translation, which seems to be the essential function of trans-translation. The polypeptide is SsrA-binding protein (Syntrophobacter fumaroxidans (strain DSM 10017 / MPOB)).